The primary structure comprises 72 residues: Large ribosomal subunit protein uL29 (72 aa).

This sequence belongs to the universal ribosomal protein uL29 family.

In Thermodesulfovibrio yellowstonii (strain ATCC 51303 / DSM 11347 / YP87), this protein is Large ribosomal subunit protein uL29.